The chain runs to 353 residues: MSERQKALDTVIKNMEKSFGKGAVMKLGDRTDRNVSTVSSGSITLDSALGVGGYPKGRIIEIYGPESSGKTTVALHAIAEVQRQGGVAAFIDAEHALDPVYAKNLGVDIENLYLSQPDHGEQGLEIAEAFVRSGAVDIIVVDSVAALTPKAEIEGEMGDSHMGLQARLMSQALRKLSGSVSKSNTIAIFINQVREKIGVMFGNPETTPGGRALKFYSSVRLEVRRAEQLKQGQEIVGNRTKIKVVKNKVAPPFKVAEVDIMYGKGISREGEIVDLGAEYEVLQKSGAWYSYDGERIGQGRENIKTYLKENPEVRDEIDQKIRKAMGVGASLEEASAQKEEVPVEDKLFDDELE.

64–71 (GPESSGKT) lines the ATP pocket. The interval 331 to 353 (LEEASAQKEEVPVEDKLFDDELE) is disordered. Basic and acidic residues predominate over residues 335 to 346 (SAQKEEVPVEDK).

The protein belongs to the RecA family.

It is found in the cytoplasm. Functionally, can catalyze the hydrolysis of ATP in the presence of single-stranded DNA, the ATP-dependent uptake of single-stranded DNA by duplex DNA, and the ATP-dependent hybridization of homologous single-stranded DNAs. It interacts with LexA causing its activation and leading to its autocatalytic cleavage. The sequence is that of Protein RecA from Macrococcus caseolyticus (strain JCSC5402) (Macrococcoides caseolyticum).